The chain runs to 154 residues: MRILGIDPGIARVGYGVIDTSNGQQQMLDCGIIRTNPGIDDGERMVEIASDLRQLIRRWKPQLAAVEKFFFYRSSTTISVVQARGVIIMTLARFRVPVMEFPPMQIKLALAGSGHAEKDEVLDAVMRELNLDQPPRPDDAADALAIALTGWFQR.

Active-site residues include D7, E67, and D139. Residues D7, E67, and D139 each coordinate Mg(2+).

It belongs to the RuvC family. As to quaternary structure, homodimer which binds Holliday junction (HJ) DNA. The HJ becomes 2-fold symmetrical on binding to RuvC with unstacked arms; it has a different conformation from HJ DNA in complex with RuvA. In the full resolvosome a probable DNA-RuvA(4)-RuvB(12)-RuvC(2) complex forms which resolves the HJ. Mg(2+) serves as cofactor.

Its subcellular location is the cytoplasm. It catalyses the reaction Endonucleolytic cleavage at a junction such as a reciprocal single-stranded crossover between two homologous DNA duplexes (Holliday junction).. Functionally, the RuvA-RuvB-RuvC complex processes Holliday junction (HJ) DNA during genetic recombination and DNA repair. Endonuclease that resolves HJ intermediates. Cleaves cruciform DNA by making single-stranded nicks across the HJ at symmetrical positions within the homologous arms, yielding a 5'-phosphate and a 3'-hydroxyl group; requires a central core of homology in the junction. The consensus cleavage sequence is 5'-(A/T)TT(C/G)-3'. Cleavage occurs on the 3'-side of the TT dinucleotide at the point of strand exchange. HJ branch migration catalyzed by RuvA-RuvB allows RuvC to scan DNA until it finds its consensus sequence, where it cleaves and resolves the cruciform DNA. This Prochlorococcus marinus (strain MIT 9313) protein is Crossover junction endodeoxyribonuclease RuvC.